The sequence spans 84 residues: Large ribosomal subunit protein bL27 (84 aa).

Positions 1-20 are disordered; that stretch reads MAHKKGGGSTKNGRDSNPKY.

The protein belongs to the bacterial ribosomal protein bL27 family.

This chain is Large ribosomal subunit protein bL27, found in Chlorobaculum tepidum (strain ATCC 49652 / DSM 12025 / NBRC 103806 / TLS) (Chlorobium tepidum).